The primary structure comprises 221 residues: Sugar transporter SWEET1 (221 aa).

Helical transmembrane passes span 3–23 (AGGV…LGMF), 44–63 (FLPF…YGVL), 68–88 (TLII…LAYL), 102–122 (ATLL…VPDL), 129–149 (LGLF…ADLA), 160–180 (LSFS…IYGF), and 186–206 (YITV…VLFY). The MtN3/slv 1 domain maps to 10 to 94 (FLSSACVLFT…LAYLHYSPQK (85 aa)). The region spanning 127–212 (QQLGLFCSVF…VLFYKYPPEQ (86 aa)) is the MtN3/slv 2 domain. Residues 149 to 221 (AKIIQTKSTQ…QDTKYRLLQT (73 aa)) are mediates interaction with TRPV2.

The protein belongs to the SWEET sugar transporter family. In terms of assembly, interacts with TRPV2; the interaction probably occurs intracellularly and depends on TRPV2 N-glycosylation.

The protein localises to the golgi apparatus membrane. It localises to the cell membrane. In terms of biological role, mediates sugar transport across membranes. May stimulate V(D)J recombination by the activation of RAG1. The protein is Sugar transporter SWEET1 (Slc50a1) of Rattus norvegicus (Rat).